Consider the following 743-residue polypeptide: Acetyl-coenzyme A synthetase, chloroplastic/glyoxysomal (743 aa).

The N-terminal 84 residues, 1 to 84, are a transit peptide targeting the chloroplast; it reads MKIGSPSSPI…LNAVVLGESL (84 aa). D613 is an active-site residue.

Belongs to the ATP-dependent AMP-binding enzyme family. As to expression, expressed in leaves, flower buds and young flowers.

Its subcellular location is the plastid. It localises to the chloroplast. The protein localises to the glyoxysome. The enzyme catalyses acetate + ATP + CoA = acetyl-CoA + AMP + diphosphate. In terms of biological role, catalyzes the production of acetyl-CoA, an activated form of acetate that can be used for lipid synthesis or for energy generation. May play a limited role in the biosynthesis of lipids. This Arabidopsis thaliana (Mouse-ear cress) protein is Acetyl-coenzyme A synthetase, chloroplastic/glyoxysomal (ACS).